The sequence spans 442 residues: tRNA modification GTPase MnmE (442 aa).

(6S)-5-formyl-5,6,7,8-tetrahydrofolate contacts are provided by R27, E84, and K124. One can recognise a TrmE-type G domain in the interval 221–366 (GLHVVIVGAP…LLDALQAFAE (146 aa)). Residues 231–236 (NAGKSS), 250–256 (SEEAGTT), and 275–278 (DTAG) each bind GTP. Mg(2+) contacts are provided by S235 and T256. K442 serves as a coordination point for (6S)-5-formyl-5,6,7,8-tetrahydrofolate.

Belongs to the TRAFAC class TrmE-Era-EngA-EngB-Septin-like GTPase superfamily. TrmE GTPase family. As to quaternary structure, homodimer. Heterotetramer of two MnmE and two MnmG subunits. K(+) serves as cofactor.

It is found in the cytoplasm. In terms of biological role, exhibits a very high intrinsic GTPase hydrolysis rate. Involved in the addition of a carboxymethylaminomethyl (cmnm) group at the wobble position (U34) of certain tRNAs, forming tRNA-cmnm(5)s(2)U34. This is tRNA modification GTPase MnmE from Brucella suis (strain ATCC 23445 / NCTC 10510).